The chain runs to 280 residues: Pantothenate synthetase (280 aa).

An ATP-binding site is contributed by 31 to 38; it reads MGNLHVGH. The active-site Proton donor is the H38. Q62 is a binding site for (R)-pantoate. Residue Q62 coordinates beta-alanine. 150-153 lines the ATP pocket; that stretch reads GKKD. A (R)-pantoate-binding site is contributed by Q156. Residues V179 and 187–190 each bind ATP; that span reads MSSR.

This sequence belongs to the pantothenate synthetase family. In terms of assembly, homodimer.

Its subcellular location is the cytoplasm. It carries out the reaction (R)-pantoate + beta-alanine + ATP = (R)-pantothenate + AMP + diphosphate + H(+). It participates in cofactor biosynthesis; (R)-pantothenate biosynthesis; (R)-pantothenate from (R)-pantoate and beta-alanine: step 1/1. Functionally, catalyzes the condensation of pantoate with beta-alanine in an ATP-dependent reaction via a pantoyl-adenylate intermediate. This is Pantothenate synthetase from Xanthomonas oryzae pv. oryzae (strain MAFF 311018).